Consider the following 252-residue polypeptide: Probable transcriptional regulatory protein Caur_1043 (252 aa).

The span at 1 to 14 (MSGHSKWHTIRRTK) shows a compositional bias: basic residues. A disordered region spans residues 1 to 22 (MSGHSKWHTIRRTKGVNDQRRG).

Belongs to the TACO1 family.

Its subcellular location is the cytoplasm. This chain is Probable transcriptional regulatory protein Caur_1043, found in Chloroflexus aurantiacus (strain ATCC 29366 / DSM 635 / J-10-fl).